Reading from the N-terminus, the 281-residue chain is N-methyltransferase tcpN (281 aa).

The protein belongs to the methyltransferase superfamily. LaeA methyltransferase family.

The protein operates within secondary metabolite biosynthesis. Functionally, N-methyltransferase; part of the gene cluster that mediates the biosynthesis of an unusual class of epipolythiodioxopiperazines (ETPs) lacking the reactive thiol group important for toxicity. Firstly, L-tyrosine is prenylated by tcpD, before undergoing condensation with L-glycine in a reaction catalyzed by the NRPS tcpP leading to the diketopiperazine (DKP) backbone. Afterwards the alpha-carbon of tyrosine is oxidized by the cytochrome P450 tcpC to form a hydroxyl group. However, in contrast other ETP biosynthesis pathways studied so far, tcpC is not able to bishydroxylate the DKP at both alpha-carbon positions, but hydroxylates the alpha-carbon of the tyrosine part and the nitrogen of the glycine part. The next steps involve an alpha,beta-elimination reaction catalyzed by tcpI, a methylation by the methyltransferase tcpN the action of the four enzyme cascade tcpG/K/J/I. Due to a dysfunctional cytochrome P450 monooxygenase tcpC, the pathway leads to the biosynthesis of probable non-toxic metabolites lacking the reactive thiol group. The chain is N-methyltransferase tcpN from Claviceps purpurea (strain 20.1) (Ergot fungus).